The sequence spans 164 residues: Protein phosphatase 1 regulatory subunit 14C (164 aa).

Positions 1-19 are enriched in gly residues; that stretch reads MSVVTGGGEAAGGTSGGGA. Residues 1-72 are disordered; sequence MSVVTGGGEA…QRRHQQGKVT (72 aa). Ser2 carries the N-acetylserine modification. Ser25 is modified (phosphoserine). Residue Arg27 is modified to Omega-N-methylarginine. Ser33 is modified (phosphoserine). The span at 50–62 shows a compositional bias: low complexity; it reads VATVAAAGQVQQQ. Thr72 carries the post-translational modification Phosphothreonine; by ILK1.

This sequence belongs to the PP1 inhibitor family. In terms of processing, has over 600-fold higher inhibitory activity when phosphorylated, creating a molecular switch for regulating the phosphorylation status of PPP1CA substrates and smooth muscle contraction. The main inhibitory site appears to be Thr-72.

It localises to the endomembrane system. Its function is as follows. Inhibitor of the PP1 regulatory subunit PPP1CA. This is Protein phosphatase 1 regulatory subunit 14C (Ppp1r14c) from Rattus norvegicus (Rat).